The chain runs to 737 residues: DNA topoisomerase 4 subunit A (737 aa).

The 465-residue stretch at 32–496 (LPDVRDGLKP…SFEEVTLTNQ (465 aa)) folds into the Topo IIA-type catalytic domain. Tyr120 (O-(5'-phospho-DNA)-tyrosine intermediate) is an active-site residue.

The protein belongs to the type II topoisomerase GyrA/ParC subunit family. ParC type 1 subfamily. Heterotetramer composed of ParC and ParE.

It is found in the cell membrane. It carries out the reaction ATP-dependent breakage, passage and rejoining of double-stranded DNA.. Its function is as follows. Topoisomerase IV is essential for chromosome segregation. It relaxes supercoiled DNA. Performs the decatenation events required during the replication of a circular DNA molecule. In Rickettsia felis (strain ATCC VR-1525 / URRWXCal2) (Rickettsia azadi), this protein is DNA topoisomerase 4 subunit A.